The following is a 263-amino-acid chain: MEIFPVFGISKISNFIANNDCRYYIDTEHQKIISDEINRQMDETVLLTNILSVEVVNDNEMYHLIPHRLSTIILCISSVGGCVISIDNDVNGKNILTFPIDHAVIISPLSKCVVVSKGPTTILVVKADIPSKRLVTSFTNDILYVNNLSLINYLPLSVFIIRRVTDYLDRHICDQIFANNKWYSIITIDNKQFPIPSNCIGMSSAKYINSSIEQDTLIHVCNLEHPFDLVYKKMQSYNSVPIKEQILYGRIDNINMSISISVY.

The protein belongs to the orthopoxvirus OPG165 family.

The chain is Protein OPG165 (OPG165) from Homo sapiens (Human).